Consider the following 184-residue polypeptide: Ribosome maturation factor RimP (184 aa).

It belongs to the RimP family.

It is found in the cytoplasm. Its function is as follows. Required for maturation of 30S ribosomal subunits. This is Ribosome maturation factor RimP from Zymomonas mobilis subsp. mobilis (strain ATCC 31821 / ZM4 / CP4).